Consider the following 315-residue polypeptide: tRNA-dihydrouridine(16) synthase (315 aa).

FMN-binding positions include 7–9 and glutamine 68; that span reads PME. The active-site Proton donor is cysteine 98. FMN-binding positions include lysine 139, 200–202, and 224–225; these read NGE and GR.

Belongs to the Dus family. DusC subfamily. The cofactor is FMN.

It carries out the reaction 5,6-dihydrouridine(16) in tRNA + NADP(+) = uridine(16) in tRNA + NADPH + H(+). The enzyme catalyses 5,6-dihydrouridine(16) in tRNA + NAD(+) = uridine(16) in tRNA + NADH + H(+). Its function is as follows. Catalyzes the synthesis of 5,6-dihydrouridine (D), a modified base found in the D-loop of most tRNAs, via the reduction of the C5-C6 double bond in target uridines. Specifically modifies U16 in tRNAs. This is tRNA-dihydrouridine(16) synthase from Shigella flexneri.